Here is a 42-residue protein sequence, read N- to C-terminus: Delta-hexatoxin-Ar1a (42 aa).

4 disulfide bridges follow: C1–C15, C8–C20, C14–C31, and C16–C42.

The protein belongs to the neurotoxin 06 (delta-actx) family. As to expression, expressed by the venom gland.

It is found in the secreted. In terms of biological role, inhibits tetrodotoxin-sensitive voltage-gated sodium channels (Nav) by binding to site 3. It slows the inactivation, causes a prolongation of action potential duration resulting in repetitive firing in autonomic and motor nerve fibers. Does not depolarize the resting potential. Does not affect tetrodotoxin-resistant sodium channels. This lethal neurotoxin is active on both insect and mammalian voltage-gated sodium channels. The sequence is that of Delta-hexatoxin-Ar1a from Atrax robustus (Sydney funnel-web spider).